Consider the following 105-residue polypeptide: MKFLALFFLALVGVAFAHDGGMGGMDMIKSYSILGAMIGLGIAAFGGAIGMGNAAAATITGTARNPGVGGKLLTTMFVAMAMIEAQVIYTLVFAIIAIYSNPFLS.

Helical transmembrane passes span 32–52 (SILG…IGMG) and 78–98 (VAMA…IIAI).

It belongs to the ATPase C chain family. As to quaternary structure, F-type ATPases have 2 components, F(1) - the catalytic core - and F(0) - the membrane proton channel. F(1) has five subunits: alpha(3), beta(3), gamma(1), delta(1), epsilon(1). F(0) has three main subunits: a(1), b(2) and c(10-14). The alpha and beta chains form an alternating ring which encloses part of the gamma chain. F(1) is attached to F(0) by a central stalk formed by the gamma and epsilon chains, while a peripheral stalk is formed by the delta and b chains.

The protein localises to the cell inner membrane. Functionally, f(1)F(0) ATP synthase produces ATP from ADP in the presence of a proton or sodium gradient. F-type ATPases consist of two structural domains, F(1) containing the extramembraneous catalytic core and F(0) containing the membrane proton channel, linked together by a central stalk and a peripheral stalk. During catalysis, ATP synthesis in the catalytic domain of F(1) is coupled via a rotary mechanism of the central stalk subunits to proton translocation. Key component of the F(0) channel; it plays a direct role in translocation across the membrane. A homomeric c-ring of between 10-14 subunits forms the central stalk rotor element with the F(1) delta and epsilon subunits. The polypeptide is ATP synthase subunit c (Helicobacter pylori (strain ATCC 700392 / 26695) (Campylobacter pylori)).